Here is a 145-residue protein sequence, read N- to C-terminus: Transcription antitermination protein NusB (145 aa).

It belongs to the NusB family.

Functionally, involved in transcription antitermination. Required for transcription of ribosomal RNA (rRNA) genes. Binds specifically to the boxA antiterminator sequence of the ribosomal RNA (rrn) operons. The sequence is that of Transcription antitermination protein NusB from Geobacter sp. (strain M21).